The following is a 350-amino-acid chain: Phenylalanine--tRNA ligase alpha subunit (350 aa).

Glu260 contacts Mg(2+).

This sequence belongs to the class-II aminoacyl-tRNA synthetase family. Phe-tRNA synthetase alpha subunit type 1 subfamily. In terms of assembly, tetramer of two alpha and two beta subunits. The cofactor is Mg(2+).

The protein localises to the cytoplasm. It catalyses the reaction tRNA(Phe) + L-phenylalanine + ATP = L-phenylalanyl-tRNA(Phe) + AMP + diphosphate + H(+). The chain is Phenylalanine--tRNA ligase alpha subunit from Mycoplasma capricolum subsp. capricolum (strain California kid / ATCC 27343 / NCTC 10154).